The following is a 113-amino-acid chain: Small ribosomal subunit protein bS6 (113 aa).

Belongs to the bacterial ribosomal protein bS6 family.

Binds together with bS18 to 16S ribosomal RNA. The protein is Small ribosomal subunit protein bS6 of Flavobacterium johnsoniae (strain ATCC 17061 / DSM 2064 / JCM 8514 / BCRC 14874 / CCUG 350202 / NBRC 14942 / NCIMB 11054 / UW101) (Cytophaga johnsonae).